The sequence spans 272 residues: MSAFEQLFQGRLPRLVMFDLDGTLVDSVPDLAAAVDQMLLKLGRKPAGVEAVREWVGNGAPMLVRRALANSLEAQGVDDVEAEYALELFNTAYEDSHELTVVYPGARETLKWLHKQGVEMALITNKPERFVAPLLDQMKIGRYFRWIIGGDTLPQKKPDPAALFFVMKMASVPASQSLFVGDSRSDVLAAKAAGVKCVALSYGYNHGRPIAEESPALVIDNLRALIPGCLEPAAEITLPDAVPSHSGNSIVVVTRKLWMKVIKALARWRWRA.

Asp-19 acts as the Nucleophile in catalysis. Mg(2+) contacts are provided by Asp-19, Asp-21, and Asp-182.

Belongs to the HAD-like hydrolase superfamily. CbbY/CbbZ/Gph/YieH family. Mg(2+) serves as cofactor.

It carries out the reaction 2-phosphoglycolate + H2O = glycolate + phosphate. It functions in the pathway organic acid metabolism; glycolate biosynthesis; glycolate from 2-phosphoglycolate: step 1/1. In terms of biological role, specifically catalyzes the dephosphorylation of 2-phosphoglycolate. Is involved in the dissimilation of the intracellular 2-phosphoglycolate formed during the DNA repair of 3'-phosphoglycolate ends, a major class of DNA lesions induced by oxidative stress. In Pseudomonas fluorescens (strain ATCC BAA-477 / NRRL B-23932 / Pf-5), this protein is Phosphoglycolate phosphatase.